We begin with the raw amino-acid sequence, 481 residues long: MTDQVFGKVSKVVCVGAGYVGGPTCAMIAHKCPHITVTVVDMNTAKIAEWNSDKLPIYEPGLDEIVFAARGRNLFFSSDIPKAIAEADLIFISVNTPTKMYGRGKGMAPDLKYVESVSRTIAQYAGGPKIVVEKSTVPVKAAESIGCILREAQKNNENLKFQVLSNPEFLAEGTAMKDLANPDRVLIGGESSPEGLQAVAELVRIYENWVPRNRIITTNTWSSELSKLVANAFLAQRISSINSISAVCEATGAEISEVAHAVGYDTRIGSKFLQASVGFGGSCFQKDVLSLVYLCESLNLPQVADYWQGVININNWQRRRFADKIIAELFNTVTDKKIAIFGFAFKKNTGDTRESSAIHVIKHLMEEHAKLSVYDPKVQKSQMLNDLASVTSAQDVERLITVESDPYAAARGAHAIVVLTEWDEFVELNYSQIHNDMQHPAAIFDGRLILDQKALREIGFRTFAIGTSPDQAYNLFGTAGY.

NAD(+) is bound by residues 16–21 (GAGYVG), aspartate 41, lysine 46, 94–98 (VNTPT), 135–136 (ST), and glutamate 172. Residues 168-172 (EFLAE), 227-231 (KLVAN), arginine 267, and 274-280 (QASVGFG) contribute to the substrate site. Residue cysteine 283 is the Nucleophile of the active site. 283–286 (CFQK) is a binding site for NAD(+). 345–346 (FK) lines the substrate pocket. Arginine 353 is a binding site for NAD(+). A substrate-binding site is contributed by arginine 447.

Belongs to the UDP-glucose/GDP-mannose dehydrogenase family. As to expression, expressed in the vulva and in oocytes.

The enzyme catalyses UDP-alpha-D-glucose + 2 NAD(+) + H2O = UDP-alpha-D-glucuronate + 2 NADH + 3 H(+). Its pathway is nucleotide-sugar biosynthesis; UDP-alpha-D-glucuronate biosynthesis; UDP-alpha-D-glucuronate from UDP-alpha-D-glucose: step 1/1. In terms of biological role, involved in the biosynthesis of glycosaminoglycans; hyaluronan, chondroitin sulfate, and heparan sulfate. The sequence is that of UDP-glucose 6-dehydrogenase (sqv-4) from Caenorhabditis elegans.